The sequence spans 111 residues: Probable 4-amino-4-deoxy-L-arabinose-phosphoundecaprenol flippase subunit ArnE (111 aa).

Transmembrane regions (helical) follow at residues 38 to 58 (LWLG…LLVL), 61 to 81 (LPVG…TLAA), and 91 to 111 (PRHW…GSAA). Residues 40–109 (LGLALICMGA…IISGIIILGS (70 aa)) enclose the EamA domain.

This sequence belongs to the ArnE family. As to quaternary structure, heterodimer of ArnE and ArnF.

It is found in the cell inner membrane. It participates in bacterial outer membrane biogenesis; lipopolysaccharide biosynthesis. In terms of biological role, translocates 4-amino-4-deoxy-L-arabinose-phosphoundecaprenol (alpha-L-Ara4N-phosphoundecaprenol) from the cytoplasmic to the periplasmic side of the inner membrane. The polypeptide is Probable 4-amino-4-deoxy-L-arabinose-phosphoundecaprenol flippase subunit ArnE (Salmonella agona (strain SL483)).